We begin with the raw amino-acid sequence, 267 residues long: Undecaprenyl-diphosphatase 2 (267 aa).

The next 8 membrane-spanning stretches (helical) occupy residues 4 to 24 (IYFI…FLPI), 43 to 63 (EEKV…CWLF), 84 to 104 (FAVI…LFIH), 109 to 129 (VLFN…IILW), 147 to 167 (IGFK…IPGT), 186 to 206 (AATE…AIYD), 219 to 239 (ILAI…VVNA), and 243 to 263 (FVAK…GLII).

This sequence belongs to the UppP family.

It is found in the cell inner membrane. It carries out the reaction di-trans,octa-cis-undecaprenyl diphosphate + H2O = di-trans,octa-cis-undecaprenyl phosphate + phosphate + H(+). In terms of biological role, catalyzes the dephosphorylation of undecaprenyl diphosphate (UPP). Confers resistance to bacitracin. The protein is Undecaprenyl-diphosphatase 2 of Shewanella oneidensis (strain ATCC 700550 / JCM 31522 / CIP 106686 / LMG 19005 / NCIMB 14063 / MR-1).